A 363-amino-acid polypeptide reads, in one-letter code: Methyltransferase pynC (363 aa).

S-adenosyl-L-methionine-binding positions include 199–200, Asp-225, 254–255, Arg-270, and Arg-271; these read GG and SF.

The protein belongs to the class I-like SAM-binding methyltransferase superfamily. Cation-independent O-methyltransferase family.

It functions in the pathway secondary metabolite biosynthesis. In terms of biological role, methyltransferase; part of the gene cluster that mediates the biosynthesis of pyranonigrins, a family of antioxidative compounds. The first step of pyranonigrins biosynthesis is performed by the hybrid PKS-NRPS synthetase that condenses 6 malonyl-CoA units to an acetyl starter unit, to form a 1,3,5-trioxotetradecane-6,8-dienyl-ACP. The enoyl reductase (ER) domain of pynA is likely to be functional during the first two rounds of polyketide chain extension, to generate the saturated C-C bonds of the alkyl side chain. PynA subsequently forms the amide bond between the acyl chain and L-serine. Although pynA has a terminal reductase domain, it appears to require the thioesterase pynI for the release of the straight-chain intermediate from pynA via the formation of a tetramic acid pyranonigrin J. The methyltransferase pynC then coverts pyranonigrin J to pyranonigrin I via N-methylation. The FAD-dependent monooxygenase pynG catalyzes an epoxidation-mediated cyclization to form the dihydro-gamma-pyrone moiety, followed by pynD-catalyzed oxidation of the alcohol to the ketone and enolization to yield the characteristic tetramic acid-fused gamma-pyrone core of pyranonigrin H. Pyranonigrin H is substrate of pynH for dehydration-mediated exo-methylene formation from the serine side chain to produce pyranonigrin E, before the oxidase pynE reduces the exo-methylene of pyranonigrin E into a pendant methyl to form pyranonigrin G. The FAD-linked oxidoreductase pynB performs the reverse reaction and converts pyranonigrin G back to pyranonigrin E. This Aspergillus niger (strain ATCC MYA-4892 / CBS 513.88 / FGSC A1513) protein is Methyltransferase pynC.